A 75-amino-acid chain; its full sequence is UPF0352 protein VV1_3121 (75 aa).

It belongs to the UPF0352 family.

The sequence is that of UPF0352 protein VV1_3121 from Vibrio vulnificus (strain CMCP6).